The primary structure comprises 107 residues: UPF0145 protein YbjQ (107 aa).

This sequence belongs to the UPF0145 family.

The protein is UPF0145 protein YbjQ of Escherichia coli (strain SMS-3-5 / SECEC).